The chain runs to 614 residues: MDKRTDYAGNITSKYEGQEVTLYGWVQRVRNLGNLVFIDLRDREGIVQVVVNKDSGEKLMEIADSLNNEDVIEVKGKVVKRSSVNPEMKTGEVEVDATEIDVLNKSKVPPFEIKDDINAAEQTRLKYRYLDLRRPTLQRAIILRSKILKAVHEYFDEQGFIDIETPILGKSSPEGARDYLVPSRIYPGSFYALPQSPQLFKQLLMGAGFDKYYQLARCFRDEDLRGDRQPEFTQIDMETSFLDEQGVQDYTEGLLKKIMKDVMNIDLKTPIKRITWDEAMNKYGSDKPDTRYEMYLHDLSPIFKDSDFKVFSGAIADGGVVKGIAVKNGAKEYSRKKIEEKQDYIKRYNAKGLAWVKYEDGEFSGPIARFLTDENKEALKKEFDLEGGELIVIVADKWKVVTDSLDHLRREFAHETGIIPEGVFDFVWVVDWPLFEYDEGLGRWIAAHHPFTMPDDEGIKLLDTDPHKAHARSYDIVMNGDEMGGGSIRIHKRSIQEKMFKALGFTKKRAYEQFGYLMDALDMGFPPHAGLAIGLDRLAMMLAGKDNIRDVTAFPKNASASEPMMHAPAPVADQQLADIGIEVEKQYEDSVKETEQRLEKEAQEDADKNSTWDE.

E174 contacts L-aspartate. An aspartate region spans residues 198 to 201 (QLFK). Position 220 (R220) interacts with L-aspartate. ATP contacts are provided by residues 220–222 (RDE) and Q229. H448 lines the L-aspartate pocket. E482 is an ATP binding site. R489 contributes to the L-aspartate binding site. An ATP-binding site is contributed by 534–537 (GLDR). A disordered region spans residues 587–614 (YEDSVKETEQRLEKEAQEDADKNSTWDE).

Belongs to the class-II aminoacyl-tRNA synthetase family. Type 1 subfamily. In terms of assembly, homodimer.

Its subcellular location is the cytoplasm. The enzyme catalyses tRNA(Asp) + L-aspartate + ATP = L-aspartyl-tRNA(Asp) + AMP + diphosphate. Its function is as follows. Catalyzes the attachment of L-aspartate to tRNA(Asp) in a two-step reaction: L-aspartate is first activated by ATP to form Asp-AMP and then transferred to the acceptor end of tRNA(Asp). The chain is Aspartate--tRNA ligase from Lactobacillus johnsonii (strain CNCM I-12250 / La1 / NCC 533).